The sequence spans 141 residues: Large ribosomal subunit protein uL11 (141 aa).

The protein belongs to the universal ribosomal protein uL11 family. In terms of assembly, part of the ribosomal stalk of the 50S ribosomal subunit. Interacts with L10 and the large rRNA to form the base of the stalk. L10 forms an elongated spine to which L12 dimers bind in a sequential fashion forming a multimeric L10(L12)X complex. One or more lysine residues are methylated.

Its function is as follows. Forms part of the ribosomal stalk which helps the ribosome interact with GTP-bound translation factors. This is Large ribosomal subunit protein uL11 from Opitutus terrae (strain DSM 11246 / JCM 15787 / PB90-1).